The primary structure comprises 163 residues: 2,3-dimethylmalate dehydratase small subunit (163 aa).

It belongs to the LeuD family. LeuD type 2 subfamily. As to quaternary structure, heterodimer of a large and a small subunit.

The catalysed reaction is (2R,3S)-2,3-dimethylmalate = dimethylmaleate + H2O. It participates in cofactor degradation; nicotinate degradation; propanoate and pyruvate from 6-hydroxynicotinate: step 7/8. The polypeptide is 2,3-dimethylmalate dehydratase small subunit (Eubacterium barkeri (Clostridium barkeri)).